A 235-amino-acid polypeptide reads, in one-letter code: Sugar fermentation stimulation protein homolog (235 aa).

Belongs to the SfsA family.

This Photorhabdus laumondii subsp. laumondii (strain DSM 15139 / CIP 105565 / TT01) (Photorhabdus luminescens subsp. laumondii) protein is Sugar fermentation stimulation protein homolog.